The chain runs to 151 residues: MTKTYLPPQDALEREWYIVDATDQRLGRLASEIAMVLRGKKKAEYTPHLDTGDFVIVINAEKIAVTGKKRTQKLYRRHSGRPGGMKTETFAKLQQRIPERIVEHAVKGMLPKNSLGKQLFTKLKVYAGPTHPHAAQKPKELKVNTIPGAES.

It belongs to the universal ribosomal protein uL13 family. In terms of assembly, part of the 50S ribosomal subunit.

Its function is as follows. This protein is one of the early assembly proteins of the 50S ribosomal subunit, although it is not seen to bind rRNA by itself. It is important during the early stages of 50S assembly. In Microchaete diplosiphon (Fremyella diplosiphon), this protein is Large ribosomal subunit protein uL13.